Reading from the N-terminus, the 318-residue chain is Acetyl-coenzyme A carboxylase carboxyl transferase subunit beta (318 aa).

In terms of domain architecture, CoA carboxyltransferase N-terminal spans 25–294 (LWSKCSECGT…AVKGELPAPA (270 aa)). Zn(2+) contacts are provided by Cys-29, Cys-32, Cys-48, and Cys-51. A C4-type zinc finger spans residues 29–51 (CSECGTMLFHRELSDNLNVCTNC). The segment at 286–318 (VKGELPAPAPLESDAETALASDTDPNGAPPSKD) is disordered.

This sequence belongs to the AccD/PCCB family. In terms of assembly, acetyl-CoA carboxylase is a heterohexamer composed of biotin carboxyl carrier protein (AccB), biotin carboxylase (AccC) and two subunits each of ACCase subunit alpha (AccA) and ACCase subunit beta (AccD). It depends on Zn(2+) as a cofactor.

Its subcellular location is the cytoplasm. The enzyme catalyses N(6)-carboxybiotinyl-L-lysyl-[protein] + acetyl-CoA = N(6)-biotinyl-L-lysyl-[protein] + malonyl-CoA. The protein operates within lipid metabolism; malonyl-CoA biosynthesis; malonyl-CoA from acetyl-CoA: step 1/1. Its function is as follows. Component of the acetyl coenzyme A carboxylase (ACC) complex. Biotin carboxylase (BC) catalyzes the carboxylation of biotin on its carrier protein (BCCP) and then the CO(2) group is transferred by the transcarboxylase to acetyl-CoA to form malonyl-CoA. The sequence is that of Acetyl-coenzyme A carboxylase carboxyl transferase subunit beta from Jannaschia sp. (strain CCS1).